The sequence spans 485 residues: Cytochrome P450 monooxygenase tndB (485 aa).

A helical membrane pass occupies residues 20–40 (VYGISAVIAVGLAIYSASLAI). Cys-481 lines the heme pocket.

The protein belongs to the cytochrome P450 family. Requires heme as cofactor.

It is found in the membrane. It participates in secondary metabolite biosynthesis; terpenoid biosynthesis. Cytochrome P450 monooxygenase; part of the gene cluster that mediates the biosynthesis of talaronoid C, a fusicoccane diterpenoid with an unprecedented tricyclic 5/8/6 ring system. The first step in the pathway is performed by the fusicoccadiene synthase tndC that possesses both prenyl transferase and terpene cyclase activity, converting isopentenyl diphosphate and dimethylallyl diphosphate into geranylgeranyl diphosphate (GGDP) and further converting GGDP into talarodiene, a precursor for talaronoid C. The remaining enzymes from the cluster include the cytochrome P450 monooxygenase tndB, the aldehyde reductase tndE and the alcohol dehydrogenase tndF that are involved in the conversion of talarodiene into talaronoid C. This is Cytochrome P450 monooxygenase tndB from Aspergillus flavipes.